The following is a 549-amino-acid chain: Chaperonin GroEL (549 aa).

Residues 30–33, Lys51, 87–91, Gly415, and Asp496 each bind ATP; these read TLGP and DGTTT.

This sequence belongs to the chaperonin (HSP60) family. Forms a cylinder of 14 subunits composed of two heptameric rings stacked back-to-back. Interacts with the co-chaperonin GroES.

It is found in the cytoplasm. It catalyses the reaction ATP + H2O + a folded polypeptide = ADP + phosphate + an unfolded polypeptide.. Together with its co-chaperonin GroES, plays an essential role in assisting protein folding. The GroEL-GroES system forms a nano-cage that allows encapsulation of the non-native substrate proteins and provides a physical environment optimized to promote and accelerate protein folding. The protein is Chaperonin GroEL of Acidiphilium cryptum (strain JF-5).